The chain runs to 158 residues: Transmembrane protein 50B (158 aa).

A2 is modified (N-acetylalanine). A run of 4 helical transmembrane segments spans residues 28 to 48 (VVAGILFFTGWWIMIDAAVVY), 56 to 76 (HAFHTCGVFSTLAFFMINAVS), 98 to 118 (WLFIGFMLMFGSLIASMWILF), and 128 to 148 (VYPGLAVFFQNALIFFSTLIY).

Belongs to the UPF0220 family. In terms of assembly, may form homotrimers or homodimers.

The protein resides in the endoplasmic reticulum membrane. It is found in the golgi apparatus membrane. The chain is Transmembrane protein 50B (TMEM50B) from Bos taurus (Bovine).